A 245-amino-acid chain; its full sequence is Extracellular protein ARB_04177 (245 aa).

Its subcellular location is the secreted. This is Extracellular protein ARB_04177 from Arthroderma benhamiae (strain ATCC MYA-4681 / CBS 112371) (Trichophyton mentagrophytes).